A 307-amino-acid polypeptide reads, in one-letter code: Chlorophyll a-b binding protein 1, chloroplastic (307 aa).

The N-terminal 44 residues, methionine 1–serine 44, are a transit peptide targeting the chloroplast. The tract at residues threonine 34 to methionine 54 is disordered. Residues threonine 52, glutamate 63, isoleucine 64, glycine 65, tyrosine 68, leucine 81, proline 86, arginine 89, glycine 90, phenylalanine 91, and aspartate 92 each contribute to the chlorophyll a site. Loroxanthin is bound at residue leucine 96. A helical transmembrane segment spans residues asparagine 111–alanine 143. 5 residues coordinate chlorophyll a: leucine 120, glutamate 124, asparagine 127, methionine 132, and lysine 146. Tryptophan 149 lines the loroxanthin pocket. Residues glutamate 151, tyrosine 163, histidine 171, glutamate 178, arginine 181, glutamate 190, arginine 198, and aspartate 200 each coordinate chlorophyll a. A helical membrane pass occupies residues threonine 161–arginine 186. Aspartate 200 and leucine 202 together coordinate all-trans-violaxanthin. The chlorophyll a site is built by leucine 204, asparagine 208, tyrosine 214, asparagine 215, alanine 218, asparagine 222, and arginine 224. The chain crosses the membrane as a helical span at residues aspartate 213–tryptophan 238. Phenylalanine 230 lines the loroxanthin pocket. Position 233 (phenylalanine 233) interacts with all-trans-violaxanthin. Glutamine 236 is a binding site for chlorophyll a. Position 244 (proline 244) interacts with all-trans-violaxanthin. 8 residues coordinate chlorophyll a: asparagine 247, histidine 251, proline 255, phenylalanine 256, alanine 258, asparagine 259, isoleucine 260, and phenylalanine 274. A helical membrane pass occupies residues aspartate 265 to glutamate 289.

It belongs to the light-harvesting chlorophyll a/b-binding (LHC) protein family. Homooligomer. Component of a light-harvesting complex (LHC) consisting of 11 chlorophyll a-b binding proteins. Binds 11 chlorophylls (Chl-a and Chl-b) and the 2 carotenoids violaxanthin and loroxanthin. serves as cofactor.

It localises to the plastid. Its subcellular location is the chloroplast thylakoid membrane. Functionally, component of a light-harvesting complex (LHC). The LHC functions as a light receptor, it captures and delivers excitation energy to photosystems with which it is closely associated. Functions in a far-red LHC by absorbing far-red light and promoting photosystem II (PSII) excitation, likely with entropy-driven uphill excitation energy transfer. Exhibits a typical absorption band at 671 nm (Qy band), as well as a large far-red absorption band at 706.5 together with fluorescence emission at around 713 nm (F713). The protein is Chlorophyll a-b binding protein 1, chloroplastic of Prasiola crispa (Green alga).